We begin with the raw amino-acid sequence, 140 residues long: Large ribosomal subunit protein uL11 (140 aa).

It belongs to the universal ribosomal protein uL11 family. In terms of assembly, part of the ribosomal stalk of the 50S ribosomal subunit. Interacts with L10 and the large rRNA to form the base of the stalk. L10 forms an elongated spine to which L12 dimers bind in a sequential fashion forming a multimeric L10(L12)X complex. In terms of processing, one or more lysine residues are methylated.

In terms of biological role, forms part of the ribosomal stalk which helps the ribosome interact with GTP-bound translation factors. This chain is Large ribosomal subunit protein uL11, found in Lawsonia intracellularis (strain PHE/MN1-00).